Reading from the N-terminus, the 158-residue chain is NAD(P)H-quinone oxidoreductase subunit J, chloroplastic (158 aa).

Belongs to the complex I 30 kDa subunit family. In terms of assembly, NDH is composed of at least 16 different subunits, 5 of which are encoded in the nucleus.

It localises to the plastid. The protein resides in the chloroplast thylakoid membrane. It catalyses the reaction a plastoquinone + NADH + (n+1) H(+)(in) = a plastoquinol + NAD(+) + n H(+)(out). It carries out the reaction a plastoquinone + NADPH + (n+1) H(+)(in) = a plastoquinol + NADP(+) + n H(+)(out). NDH shuttles electrons from NAD(P)H:plastoquinone, via FMN and iron-sulfur (Fe-S) centers, to quinones in the photosynthetic chain and possibly in a chloroplast respiratory chain. The immediate electron acceptor for the enzyme in this species is believed to be plastoquinone. Couples the redox reaction to proton translocation, and thus conserves the redox energy in a proton gradient. The protein is NAD(P)H-quinone oxidoreductase subunit J, chloroplastic of Nandina domestica (Heavenly bamboo).